Reading from the N-terminus, the 535-residue chain is Dual specificity mitogen-activated protein kinase kinase 7 (535 aa).

Alanine 2 is modified (N-acetylalanine). The stretch at 2–30 (AASSLEQKLSRLEAKLKQENREARRRIDL) forms a coiled coil. A d domain region spans residues 37 to 73 (QRPRPIIVITLSPAPAPSQRAALQLPLANDGGSRSPS). Residues 63 to 93 (LANDGGSRSPSSESSPQHPTPPTRPRHMLGL) are disordered. Residues 69–79 (SRSPSSESSPQ) are compositionally biased toward low complexity. One can recognise a Protein kinase domain in the interval 136–396 (LENLGEMGSG…YNKLLEHSFI (261 aa)). ATP is bound by residues 142 to 150 (MGSGTCGQV) and lysine 165. Catalysis depends on aspartate 259, which acts as the Proton acceptor. Serine 287 carries the post-translational modification Phosphoserine; by MAP3K. A Phosphothreonine; by MAP3K modification is found at threonine 291. Positions 393–416 (HSFIKHYEILEVDVASWFKDVMAK) are DVD domain. Residue serine 427 is modified to Phosphoserine.

The protein belongs to the protein kinase superfamily. STE Ser/Thr protein kinase family. MAP kinase kinase subfamily. In terms of assembly, interacts with RASSF7, the interaction promotes phosphorylation. Interacts with VRK2. Interacts (via its D domain) with its substrates MAPK8/JNK1, MAPK9/JNK2 and MAPK10/JNK3. Interacts (via its DVD domain) with MAP3Ks activators like MAP3K5/ASK1 and MAP3K1/MEKK1. Interacts with SH3RF1, MAPK8IP1/JIP1, MAPK8IP2/JIP2 and MAPK8IP3/JIP3 scaffold proteins. Found in a complex with SH3RF1, RAC1, MAP3K11/MLK3, MAPK8IP1/JIP1 and MAPK8/JNK1. Found in a complex with SH3RF1, RAC2, MAP3K7/TAK1, MAPK8IP1/JIP1, MAPK8/JNK1 and MAPK9/JNK2. Mg(2+) is required as a cofactor. Post-translationally, activated by phosphorylation on Ser-287 and Thr-291 by MAP kinase kinase kinases (MAP3Ks). Expressed at high levels in brain, lung, liver, skeletal muscle, kidney, and testis and at lower levels in the heart and spleen.

Its subcellular location is the nucleus. The protein resides in the cytoplasm. It carries out the reaction L-seryl-[protein] + ATP = O-phospho-L-seryl-[protein] + ADP + H(+). The enzyme catalyses L-threonyl-[protein] + ATP = O-phospho-L-threonyl-[protein] + ADP + H(+). It catalyses the reaction L-tyrosyl-[protein] + ATP = O-phospho-L-tyrosyl-[protein] + ADP + H(+). With respect to regulation, activated by phosphorylation by specific MAP kinase kinase kinases such as MAP3K1/MEKK1, MAP3K3/MEKK3, MAP3K11/MLK3 and MAP3K12/DLK. Isoforms 3 and 4 have lower basal activity but a higher level of inducible activation, than isoforms 2, 6, 7 and 8. Functionally, dual specificity protein kinase which acts as an essential component of the MAP kinase signal transduction pathway. Essential component of the stress-activated protein kinase/c-Jun N-terminal kinase (SAP/JNK) signaling pathway. With MAP2K4/MKK4, is the one of the only known kinase to directly activate the stress-activated protein kinase/c-Jun N-terminal kinases MAPK8/JNK1, MAPK9/JNK2 and MAPK10/JNK3. MAP2K4/MKK4 and MAP2K7/MKK7 both activate the JNKs by phosphorylation, but they differ in their preference for the phosphorylation site in the Thr-Pro-Tyr motif. MAP2K4/MKK4 shows preference for phosphorylation of the Tyr residue and MAP2K7/MKK7 for the Thr residue. The monophosphorylation of JNKs on the Thr residue is sufficient to increase JNK activity indicating that MAP2K7/MKK7 is important to trigger JNK activity, while the additional phosphorylation of the Tyr residue by MAP2K4/MKK4 ensures optimal JNK activation. Has a specific role in JNK signal transduction pathway activated by pro-inflammatory cytokines. The MKK/JNK signaling pathway is also involved in mitochondrial death signaling pathway, including the release cytochrome c, leading to apoptosis. Part of a non-canonical MAPK signaling pathway, composed of the upstream MAP3K12 kinase and downstream MAP kinases MAPK1/ERK2 and MAPK3/ERK1, that enhances the AP-1-mediated transcription of APP in response to APOE. This chain is Dual specificity mitogen-activated protein kinase kinase 7, found in Mus musculus (Mouse).